We begin with the raw amino-acid sequence, 219 residues long: Uracil-DNA glycosylase (219 aa).

D61 serves as the catalytic Proton acceptor.

This sequence belongs to the uracil-DNA glycosylase (UDG) superfamily. UNG family.

Its subcellular location is the cytoplasm. It catalyses the reaction Hydrolyzes single-stranded DNA or mismatched double-stranded DNA and polynucleotides, releasing free uracil.. Excises uracil residues from the DNA which can arise as a result of misincorporation of dUMP residues by DNA polymerase or due to deamination of cytosine. The chain is Uracil-DNA glycosylase from Haemophilus influenzae (strain PittEE).